A 1028-amino-acid polypeptide reads, in one-letter code: Kinesin-like protein KIF28 (1028 aa).

Residues 11–358 enclose the Kinesin motor domain; that stretch reads SVRVAVRVRP…LRYAERAKKV (348 aa). ATP is bound at residue 114–121; the sequence is GQTGSGKS. In terms of domain architecture, FHA spans 460-523; sequence CDVGRAASNA…LQHLDRIILG (64 aa). Residues 873 to 902 are a coiled coil; the sequence is NQVPELYQKLLKLEQETELLRDVNRALRGE.

The protein belongs to the TRAFAC class myosin-kinesin ATPase superfamily. Kinesin family.

Its subcellular location is the mitochondrion membrane. Functionally, microtubule-dependent motor protein required for mitochondrion morphology and transport of mitochondria in neuronal cells. This is Kinesin-like protein KIF28 from Mus musculus (Mouse).